The sequence spans 653 residues: Fructose-1,6-bisphosphatase class 3 2 (653 aa).

It belongs to the FBPase class 3 family. Requires Mn(2+) as cofactor.

It catalyses the reaction beta-D-fructose 1,6-bisphosphate + H2O = beta-D-fructose 6-phosphate + phosphate. The protein operates within carbohydrate biosynthesis; gluconeogenesis. The protein is Fructose-1,6-bisphosphatase class 3 2 of Clostridium beijerinckii (strain ATCC 51743 / NCIMB 8052) (Clostridium acetobutylicum).